Here is a 365-residue protein sequence, read N- to C-terminus: 3-dehydroquinate synthase (365 aa).

Residues 106-110 (GVIGD), 130-131 (TT), K142, K151, and 169-172 (FFAT) contribute to the NAD(+) site. Residues E184, H247, and H264 each coordinate Zn(2+).

Belongs to the sugar phosphate cyclases superfamily. Dehydroquinate synthase family. Requires NAD(+) as cofactor. Co(2+) is required as a cofactor. Zn(2+) serves as cofactor.

Its subcellular location is the cytoplasm. The catalysed reaction is 7-phospho-2-dehydro-3-deoxy-D-arabino-heptonate = 3-dehydroquinate + phosphate. It functions in the pathway metabolic intermediate biosynthesis; chorismate biosynthesis; chorismate from D-erythrose 4-phosphate and phosphoenolpyruvate: step 2/7. Functionally, catalyzes the conversion of 3-deoxy-D-arabino-heptulosonate 7-phosphate (DAHP) to dehydroquinate (DHQ). The sequence is that of 3-dehydroquinate synthase from Listeria innocua serovar 6a (strain ATCC BAA-680 / CLIP 11262).